We begin with the raw amino-acid sequence, 54 residues long: Large ribosomal subunit protein bL33 (54 aa).

Belongs to the bacterial ribosomal protein bL33 family.

This Corynebacterium efficiens (strain DSM 44549 / YS-314 / AJ 12310 / JCM 11189 / NBRC 100395) protein is Large ribosomal subunit protein bL33.